The chain runs to 199 residues: Puromycin N-acetyltransferase (199 aa).

The region spanning 6 to 198 (PTVRLATRDD…RTWCMTRKPG (193 aa)) is the N-acetyltransferase domain.

In terms of biological role, detoxification of puromycin. In Streptomyces alboniger, this protein is Puromycin N-acetyltransferase (pac).